Here is a 267-residue protein sequence, read N- to C-terminus: Glucosamine-6-phosphate deaminase (267 aa).

Asp-72 functions as the Proton acceptor; for enolization step in the catalytic mechanism. The active-site For ring-opening step is the Asp-141. The active-site Proton acceptor; for ring-opening step is the His-143. Glu-148 acts as the For ring-opening step in catalysis.

This sequence belongs to the glucosamine/galactosamine-6-phosphate isomerase family. NagB subfamily. As to quaternary structure, homohexamer.

It carries out the reaction alpha-D-glucosamine 6-phosphate + H2O = beta-D-fructose 6-phosphate + NH4(+). Its pathway is amino-sugar metabolism; N-acetylneuraminate degradation; D-fructose 6-phosphate from N-acetylneuraminate: step 5/5. With respect to regulation, allosterically activated by N-acetylglucosamine 6-phosphate (GlcNAc6P). Functionally, catalyzes the reversible isomerization-deamination of glucosamine 6-phosphate (GlcN6P) to form fructose 6-phosphate (Fru6P) and ammonium ion. The protein is Glucosamine-6-phosphate deaminase of Pasteurella multocida (strain Pm70).